The primary structure comprises 661 residues: Hemocyanin C chain (661 aa).

A disulfide bridge links C3 with C557. Positions 200, 204, 230, 350, 354, and 390 each coordinate Cu cation. N476 carries N-linked (GlcNAc...) asparagine glycosylation.

The protein belongs to the tyrosinase family. Hemocyanin subfamily. In terms of assembly, hexamer of a number of different chains, of which A, B, and C have been identified. Hemolymph.

It localises to the secreted. The protein localises to the extracellular space. In terms of biological role, hemocyanins are copper-containing oxygen carriers occurring freely dissolved in the hemolymph of many mollusks and arthropods. The chain is Hemocyanin C chain from Panulirus interruptus (California spiny lobster).